Consider the following 257-residue polypeptide: uncharacterized protein (257 aa).

Residues 1–22 (MIHSKRLKMCLCLIILSVFIGA) form the signal peptide. A lipid anchor (N-palmitoyl cysteine) is attached at C23. C23 carries S-diacylglycerol cysteine lipidation.

The protein belongs to the staphylococcal tandem lipoprotein family.

The protein localises to the cell membrane. This is an uncharacterized protein from Staphylococcus aureus (strain MRSA252).